The following is a 189-amino-acid chain: NADH-quinone oxidoreductase subunit B (189 aa).

The [4Fe-4S] cluster site is built by C39, C40, C104, and C135.

This sequence belongs to the complex I 20 kDa subunit family. NDH-1 is composed of 14 different subunits. Subunits NuoB, C, D, E, F, and G constitute the peripheral sector of the complex. [4Fe-4S] cluster serves as cofactor.

It is found in the cell inner membrane. It carries out the reaction a quinone + NADH + 5 H(+)(in) = a quinol + NAD(+) + 4 H(+)(out). NDH-1 shuttles electrons from NADH, via FMN and iron-sulfur (Fe-S) centers, to quinones in the respiratory chain. The immediate electron acceptor for the enzyme in this species is believed to be a menaquinone. Couples the redox reaction to proton translocation (for every two electrons transferred, four hydrogen ions are translocated across the cytoplasmic membrane), and thus conserves the redox energy in a proton gradient. The chain is NADH-quinone oxidoreductase subunit B from Chlorobium limicola (strain DSM 245 / NBRC 103803 / 6330).